The sequence spans 423 residues: Major capsid protein (423 aa).

The interval 47–67 (SVSFKRPHQFKSERTETGDIT) is disordered. The segment covering 56–67 (FKSERTETGDIT) has biased composition (basic and acidic residues).

The protein belongs to the P22 phage major capsid protein family.

The protein localises to the virion. In terms of biological role, assembles to form an icosahedral capsid. The sequence is that of Major capsid protein (24) from Escherichia coli (Bacteriophage APSE-1).